Here is a 455-residue protein sequence, read N- to C-terminus: Phosphoglucosamine mutase (455 aa).

S106 functions as the Phosphoserine intermediate in the catalytic mechanism. Positions 106, 245, 247, and 249 each coordinate Mg(2+). Position 106 is a phosphoserine (S106).

Belongs to the phosphohexose mutase family. Mg(2+) serves as cofactor. Post-translationally, activated by phosphorylation.

It catalyses the reaction alpha-D-glucosamine 1-phosphate = D-glucosamine 6-phosphate. Its function is as follows. Catalyzes the conversion of glucosamine-6-phosphate to glucosamine-1-phosphate. The chain is Phosphoglucosamine mutase from Acaryochloris marina (strain MBIC 11017).